Reading from the N-terminus, the 416-residue chain is Putative pseudouridine transporter (416 aa).

Over 1–2 (MD) the chain is Periplasmic. The chain crosses the membrane as a helical span at residues 3–23 (IMRSVVGMVVLLAIAFLLSVN). The Cytoplasmic segment spans residues 24–31 (KKSISLRT). The helical transmembrane segment at 32–52 (VGAALLLQIAIGGIMLYFPPG) threads the bilayer. The Periplasmic portion of the chain corresponds to 53 to 104 (KWAVEQAALGVHKVMSYSDAGSAFIFGSLVGPKMDVLFDGAGFIFAFRVLPA). Residues 105–125 (IIFVTALISLLYYIGVMGLLI) form a helical membrane-spanning segment. Topologically, residues 126–172 (RILGSIFQKALNISKIESFVAVTTIFLGQNEIPAIVKPFIDRMNRNE) are cytoplasmic. A helical transmembrane segment spans residues 173-193 (LFTAICSGMASIAGSMMIGYA). Topologically, residues 194 to 196 (GMG) are periplasmic. The helical transmembrane segment at 197 to 217 (VPIDYLLAASLMAIPGGILFA) threads the bilayer. Residues 218 to 268 (RILSPATEPSQVTFENLSFSETPPKSFIEAAASGAMTGLKIAAGVATVVMA) lie on the Cytoplasmic side of the membrane. A helical transmembrane segment spans residues 269 to 289 (FVAIIALINGIIGGIGGWFGF). Topologically, residues 290-352 (ANASLESIFG…QTGGTLEVKT (63 aa)) are periplasmic. Residues 353-373 (IAIISFALCGFANFGSIGVVV) form a helical membrane-spanning segment. Over 374–394 (GAFSAISPKRAPEIAQLGLRA) the chain is Cytoplasmic. A helical membrane pass occupies residues 395–415 (LAAATLSNLMSATIAGFFIGL). A topological domain (periplasmic) is located at residue Ala416.

It belongs to the concentrative nucleoside transporter (CNT) (TC 2.A.41) family.

The protein resides in the cell inner membrane. Its function is as follows. Could be involved in pseudouridine transport. In Escherichia coli (strain K12), this protein is Putative pseudouridine transporter (psuT).